The sequence spans 103 residues: MTGRGKGGKGLGKGGAKRHRKVLRDNIQGITKPAIRRLARRGGVKRISSLIYEETRGVLKVFLENVIRDAVTYTEHAKIPTVTAMDVVYALKRQGRTLYGFGG.

The segment covering 1–14 (MTGRGKGGKGLGKG) has biased composition (gly residues). Residues 1–20 (MTGRGKGGKGLGKGGAKRHR) are disordered. Lysine 6 and lysine 13 each carry N6-acetyl-N6-methyllysine; alternate. A DNA-binding region spans residues 17–21 (KRHRK).

Belongs to the histone H4 family. The nucleosome is a histone octamer containing two molecules each of H2A, H2B, H3 and H4 assembled in one H3-H4 heterotetramer and two H2A-H2B heterodimers. The octamer wraps approximately 147 bp of DNA.

The protein resides in the nucleus. It is found in the chromosome. Functionally, core component of nucleosome. Nucleosomes wrap and compact DNA into chromatin, limiting DNA accessibility to the cellular machineries which require DNA as a template. Histones thereby play a central role in transcription regulation, DNA repair, DNA replication and chromosomal stability. DNA accessibility is regulated via a complex set of post-translational modifications of histones, also called histone code, and nucleosome remodeling. The polypeptide is Histone H4 (Trichogramma cacaeciae (Moth egg parasite)).